A 1342-amino-acid chain; its full sequence is DNA-directed RNA polymerase subunit beta (1342 aa).

It belongs to the RNA polymerase beta chain family. As to quaternary structure, the RNAP catalytic core consists of 2 alpha, 1 beta, 1 beta' and 1 omega subunit. When a sigma factor is associated with the core the holoenzyme is formed, which can initiate transcription.

It carries out the reaction RNA(n) + a ribonucleoside 5'-triphosphate = RNA(n+1) + diphosphate. Functionally, DNA-dependent RNA polymerase catalyzes the transcription of DNA into RNA using the four ribonucleoside triphosphates as substrates. This chain is DNA-directed RNA polymerase subunit beta, found in Erwinia tasmaniensis (strain DSM 17950 / CFBP 7177 / CIP 109463 / NCPPB 4357 / Et1/99).